The following is a 126-amino-acid chain: Small ribosomal subunit protein bS6 (126 aa).

Residues 107 to 126 (RDRERGERSERPRDDFAPAA) are disordered.

The protein belongs to the bacterial ribosomal protein bS6 family.

In terms of biological role, binds together with bS18 to 16S ribosomal RNA. This chain is Small ribosomal subunit protein bS6, found in Caulobacter sp. (strain K31).